The primary structure comprises 387 residues: Leucine aminopeptidase 1 (387 aa).

The N-terminal stretch at 1–18 (MKFTNLSLLALSASLASA) is a signal peptide. A propeptide spanning residues 19-86 (RFVEQHETDQ…LGTLRTSSVK (68 aa)) is cleaved from the precursor. A glycan (N-linked (GlcNAc...) asparagine) is linked at Asn-179. Zn(2+) is bound by residues His-187, Asp-206, Glu-245, and Asp-272. Cys-321 and Cys-325 are oxidised to a cystine. Zn(2+) is bound at residue His-354.

Belongs to the peptidase M28 family. M28E subfamily. In terms of assembly, monomer. Zn(2+) serves as cofactor.

It localises to the secreted. Extracellular aminopeptidase that allows assimilation of proteinaceous substrates. This is Leucine aminopeptidase 1 (lap1) from Sclerotinia sclerotiorum (strain ATCC 18683 / 1980 / Ss-1) (White mold).